The sequence spans 64 residues: DNA-binding protein 7a (64 aa).

N6-methyllysine; partial is present on residues Lys5 and Lys7.

The protein belongs to the 7 kDa DNA-binding/endoribonuclease P2 family. Homodimer. In terms of processing, lys-5 and Lys-7 were found to be 60% monomethylated. Post-translationally, ADP-ribosylated by endogenous proteins in vitro.

Functionally, can constrain negative DNA supercoils. May be involved in maintaining the integrity of the genome at high temperature. Has RNA endonuclease activity with a narrow substrate specificity; the cleavage products are 3'-phosphooligonucleotides. The chain is DNA-binding protein 7a (sso7a1) from Saccharolobus solfataricus (strain ATCC 35092 / DSM 1617 / JCM 11322 / P2) (Sulfolobus solfataricus).